Here is a 78-residue protein sequence, read N- to C-terminus: Defensin-like protein 281 (78 aa).

An N-terminal signal peptide occupies residues 1–23; that stretch reads MASTKYLVLLFICLSVLLTPGLG. Intrachain disulfides connect cysteine 37–cysteine 60, cysteine 46–cysteine 72, and cysteine 50–cysteine 74.

Belongs to the DEFL family.

It is found in the secreted. In Arabidopsis thaliana (Mouse-ear cress), this protein is Defensin-like protein 281.